The primary structure comprises 88 residues: Large ribosomal subunit protein eL31 (88 aa).

The protein belongs to the eukaryotic ribosomal protein eL31 family.

This is Large ribosomal subunit protein eL31 (rpl31e) from Sulfurisphaera tokodaii (strain DSM 16993 / JCM 10545 / NBRC 100140 / 7) (Sulfolobus tokodaii).